A 147-amino-acid polypeptide reads, in one-letter code: D(1B) dopamine receptor (147 aa).

Residues S1–W12 traverse the membrane as a helical segment. Over H13–R55 the chain is Extracellular. An N-linked (GlcNAc...) asparagine glycan is attached at N54. The chain crosses the membrane as a helical span at residues T56–T78. The Cytoplasmic portion of the chain corresponds to R79–K128. A helical membrane pass occupies residues T129 to L147.

This sequence belongs to the G-protein coupled receptor 1 family.

It is found in the cell membrane. Dopamine receptor whose activity is mediated by G proteins which activate adenylyl cyclase. In Macaca mulatta (Rhesus macaque), this protein is D(1B) dopamine receptor (DRD5).